Here is a 263-residue protein sequence, read N- to C-terminus: Tryptophan synthase alpha chain (263 aa).

Active-site proton acceptor residues include glutamate 49 and aspartate 60.

It belongs to the TrpA family. As to quaternary structure, tetramer of two alpha and two beta chains.

It carries out the reaction (1S,2R)-1-C-(indol-3-yl)glycerol 3-phosphate + L-serine = D-glyceraldehyde 3-phosphate + L-tryptophan + H2O. It functions in the pathway amino-acid biosynthesis; L-tryptophan biosynthesis; L-tryptophan from chorismate: step 5/5. In terms of biological role, the alpha subunit is responsible for the aldol cleavage of indoleglycerol phosphate to indole and glyceraldehyde 3-phosphate. This Cereibacter sphaeroides (strain ATCC 17025 / ATH 2.4.3) (Rhodobacter sphaeroides) protein is Tryptophan synthase alpha chain.